Consider the following 54-residue polypeptide: UPF0391 membrane protein Rfer_1875 (54 aa).

Helical transmembrane passes span 5–25 (AVVFFVIALIAALFGFGGIAA) and 30–50 (IGKILFIVFAILAVASFLFGL).

This sequence belongs to the UPF0391 family.

Its subcellular location is the cell membrane. The chain is UPF0391 membrane protein Rfer_1875 from Albidiferax ferrireducens (strain ATCC BAA-621 / DSM 15236 / T118) (Rhodoferax ferrireducens).